A 543-amino-acid polypeptide reads, in one-letter code: 2,3-bisphosphoglycerate-independent phosphoglycerate mutase (543 aa).

Residues D20 and S73 each contribute to the Mn(2+) site. Catalysis depends on S73, which acts as the Phosphoserine intermediate. Substrate contacts are provided by residues H134, 166–167 (RD), R198, R204, 278–281 (RGDR), and K360. Residues D428, H432, D469, H470, and H488 each coordinate Mn(2+).

The protein belongs to the BPG-independent phosphoglycerate mutase family. In terms of assembly, monomer. Mn(2+) is required as a cofactor.

It catalyses the reaction (2R)-2-phosphoglycerate = (2R)-3-phosphoglycerate. It participates in carbohydrate degradation; glycolysis; pyruvate from D-glyceraldehyde 3-phosphate: step 3/5. In terms of biological role, catalyzes the interconversion of 2-phosphoglycerate and 3-phosphoglycerate. The polypeptide is 2,3-bisphosphoglycerate-independent phosphoglycerate mutase (Rhodopirellula baltica (strain DSM 10527 / NCIMB 13988 / SH1)).